Reading from the N-terminus, the 390-residue chain is Argininosuccinate synthase (390 aa).

6 to 14 is an ATP binding site; the sequence is AYSGGLDTT. L-citrulline is bound at residue Y84. Residue G114 coordinates ATP. L-aspartate contacts are provided by T116, N120, and D121. N120 serves as a coordination point for L-citrulline. The L-citrulline site is built by R124, S171, S180, E253, and Y265.

This sequence belongs to the argininosuccinate synthase family. Type 1 subfamily. As to quaternary structure, homotetramer.

It is found in the cytoplasm. The enzyme catalyses L-citrulline + L-aspartate + ATP = 2-(N(omega)-L-arginino)succinate + AMP + diphosphate + H(+). Its pathway is amino-acid biosynthesis; L-arginine biosynthesis; L-arginine from L-ornithine and carbamoyl phosphate: step 2/3. The protein is Argininosuccinate synthase of Sulfurisphaera tokodaii (strain DSM 16993 / JCM 10545 / NBRC 100140 / 7) (Sulfolobus tokodaii).